A 921-amino-acid polypeptide reads, in one-letter code: TRPM8 channel-associated factor 1 (921 aa).

In terms of domain architecture, Peptidase M60 spans 542–841 (YCWMSTGLYI…TYLQLQEAFG (300 aa)).

Belongs to the TCAF family. As to quaternary structure, interacts with TRPM8 (via N-terminus and C-terminus domains); the interaction inhibits TRPM8 channel activity. Interacts with TRPV6. Isoform 2 is expressed in the prostate and strongly expressed in cancerous prostate samples.

The protein resides in the cell membrane. Functionally, positively regulates the plasma membrane cation channel TRPM8 activity. Involved in the recruitment of TRPM8 to the cell surface. Promotes prostate cancer cell migration inhibition in a TRPM8-dependent manner. This is TRPM8 channel-associated factor 1 from Homo sapiens (Human).